A 510-amino-acid polypeptide reads, in one-letter code: ATP synthase subunit alpha (510 aa).

170–177 lines the ATP pocket; sequence GDRQTGKT.

Belongs to the ATPase alpha/beta chains family. In terms of assembly, F-type ATPases have 2 components, CF(1) - the catalytic core - and CF(0) - the membrane proton channel. CF(1) has five subunits: alpha(3), beta(3), gamma(1), delta(1), epsilon(1). CF(0) has three main subunits: a(1), b(2) and c(9-12). The alpha and beta chains form an alternating ring which encloses part of the gamma chain. CF(1) is attached to CF(0) by a central stalk formed by the gamma and epsilon chains, while a peripheral stalk is formed by the delta and b chains.

The protein resides in the cell inner membrane. The enzyme catalyses ATP + H2O + 4 H(+)(in) = ADP + phosphate + 5 H(+)(out). Produces ATP from ADP in the presence of a proton gradient across the membrane. The alpha chain is a regulatory subunit. The polypeptide is ATP synthase subunit alpha (Maricaulis maris (strain MCS10) (Caulobacter maris)).